An 835-amino-acid polypeptide reads, in one-letter code: Invasin (835 aa).

One can recognise a Big-1 domain in the interval 451–541; that stretch reads VITSEVTDDG…QQATVDVRFA (91 aa).

The protein belongs to the intimin/invasin family.

Its subcellular location is the cell outer membrane. In terms of biological role, invasin is a protein that allows enteric bacteria to penetrate cultured mammalian cells. The entry of invasin in the cell is mediated by binding several beta-1 chain integrins. The sequence is that of Invasin from Yersinia enterocolitica.